Here is a 187-residue protein sequence, read N- to C-terminus: Elongation factor P (187 aa).

It belongs to the elongation factor P family.

The protein localises to the cytoplasm. Its pathway is protein biosynthesis; polypeptide chain elongation. Involved in peptide bond synthesis. Stimulates efficient translation and peptide-bond synthesis on native or reconstituted 70S ribosomes in vitro. Probably functions indirectly by altering the affinity of the ribosome for aminoacyl-tRNA, thus increasing their reactivity as acceptors for peptidyl transferase. The protein is Elongation factor P of Mycobacterium sp. (strain JLS).